The chain runs to 452 residues: Trigger factor (452 aa).

Residues 170–255 enclose the PPIase FKBP-type domain; sequence GDRVTIDFTG…VKSVAAPGPL (86 aa).

This sequence belongs to the FKBP-type PPIase family. Tig subfamily.

The protein localises to the cytoplasm. It catalyses the reaction [protein]-peptidylproline (omega=180) = [protein]-peptidylproline (omega=0). Its function is as follows. Involved in protein export. Acts as a chaperone by maintaining the newly synthesized protein in an open conformation. Functions as a peptidyl-prolyl cis-trans isomerase. In Xanthobacter autotrophicus (strain ATCC BAA-1158 / Py2), this protein is Trigger factor.